Here is a 306-residue protein sequence, read N- to C-terminus: Ribonuclease Z (306 aa).

7 residues coordinate Zn(2+): His-63, His-65, Asp-67, His-68, His-140, Asp-211, and His-269. Asp-67 (proton acceptor) is an active-site residue.

It belongs to the RNase Z family. Homodimer. Requires Zn(2+) as cofactor.

It carries out the reaction Endonucleolytic cleavage of RNA, removing extra 3' nucleotides from tRNA precursor, generating 3' termini of tRNAs. A 3'-hydroxy group is left at the tRNA terminus and a 5'-phosphoryl group is left at the trailer molecule.. In terms of biological role, zinc phosphodiesterase, which displays some tRNA 3'-processing endonuclease activity. Probably involved in tRNA maturation, by removing a 3'-trailer from precursor tRNA. This chain is Ribonuclease Z, found in Listeria innocua serovar 6a (strain ATCC BAA-680 / CLIP 11262).